A 248-amino-acid polypeptide reads, in one-letter code: Glycoprotein BILF2 (248 aa).

An N-terminal signal peptide occupies residues 1 to 17 (MTHLVLLLCCCVGSVCA). Positions 19–125 (FSDLVKFENV…NVTLRNCSVA (107 aa)) constitute an Ig-like domain. N-linked (GlcNAc...) asparagine; by host glycosylation is found at asparagine 27, asparagine 37, asparagine 45, asparagine 73, asparagine 83, asparagine 92, asparagine 95, asparagine 104, asparagine 116, asparagine 121, asparagine 131, and asparagine 144. An intrachain disulfide couples cysteine 40 to cysteine 115. Residues 167–191 (VSHTTSTSHRPHRRPVSKRPTHKPV) are disordered. Positions 175–188 (HRPHRRPVSKRPTH) are enriched in basic residues. Residues 210-230 (WALLLITCAVVAPVLLIIIIS) form a helical membrane-spanning segment.

The protein belongs to the Epstein-Barr virus BILF2 protein family.

It localises to the membrane. This is Glycoprotein BILF2 from Epstein-Barr virus (strain B95-8) (HHV-4).